A 751-amino-acid chain; its full sequence is FAD-dependent monooxygenase atnA (751 aa).

The chain crosses the membrane as a helical span at residues L8–F28. The FAD site is built by E34, G48, and R109. The active site involves Y218. Residues D311 and A324 each contribute to the FAD site. 8 helical membrane passes run P446 to V466, S481 to I501, L508 to W528, A563 to S583, D590 to L610, I639 to L659, I663 to V683, and A706 to A726.

It belongs to the paxM FAD-dependent monooxygenase family. FAD is required as a cofactor.

The protein resides in the membrane. It participates in secondary metabolite biosynthesis; terpenoid biosynthesis. Functionally, FAD-dependent monooxygenase; part of the gene cluster that mediates the biosynthesis of the meroterpenoids arthripenoids. The pathway begins with the HR-PKS atnH that catalyzes two chain-extension steps to form a reduced triketide, which then primes the SAT domain in the NR-PKS atnG to initiate three more cycles of extension to give a linear hexaketide corresponding to the polyketide part of arthripenoids. The FAD-dependent monooxygenase atnJ then performs an oxidative decarboxylation at C11 of the atnH/atnG product, via an electrophilic aromatic hydroxylation with concomitant ipso-decarboxylation. The membrane-bound polyprenyl transferase atnF then introduces a farnesyl group before the FAD-dependent monooxygenase atnK functions as the first epoxidase on terminal C12'-C13' olefin, followed by a second epoxidation on C7'-C8' catalyzed by atnA. The terpene cyclase/mutase atnI then initiates the sequential tricyclic ring formation through protonation of the terminal epoxide and catalyzes the regioselective and stereoselective 6/6/6-tricyclic ring formation. The cytochrome P450 monooxygenase atnM is responsible for hydroxylating both C1' and C10'. The next steps may involve ketoreduction and acetyl transfer by the ketoreductase atnB and the acetyltransferase atnC, and lead to the production of arthripenoid B, the final biosynthetic product of the atn cluster. The hydroquinone moiety in arthripenoid B is prone to undergo spontaneous oxidation to afford a benzoquinone compound, a key intermediate for generating structure diversity. For instance, addition of a cysteine followed by ring contraction gives arthripenoid A, tautomerization gives the main product arthripenoid C, addition of a molecular of water or amine affords arthripenoid D or E, respectively, and loss of one water forms arthripenoid F. The protein is FAD-dependent monooxygenase atnA of Arthrinium sp.